An 82-amino-acid polypeptide reads, in one-letter code: Small ribosomal subunit protein bS16 (82 aa).

Belongs to the bacterial ribosomal protein bS16 family.

This Rippkaea orientalis (strain PCC 8801 / RF-1) (Cyanothece sp. (strain PCC 8801)) protein is Small ribosomal subunit protein bS16.